A 757-amino-acid polypeptide reads, in one-letter code: Chloride anion exchanger (757 aa).

At 1 to 71 the chain is on the cytoplasmic side; it reads MIEAIGNQYV…SWLPAYKIKE (71 aa). The helical transmembrane segment at 72–92 threads the bilayer; the sequence is WLLSDIVSGISTGLVAVLQGL. Ala93 is a topological domain (extracellular). A helical membrane pass occupies residues 94 to 114; sequence FALLVNIPPAYGLYAAFFPVI. Over 115–124 the chain is Cytoplasmic; it reads TYFFLGTSRH. A helical membrane pass occupies residues 125–145; it reads ISVGPFPVLSMMVGVVVTRVA. Topologically, residues 146-176 are extracellular; sequence SGSDTSPALSSSSAENDSMIEEKVMVAASVT. Residue Asn161 is glycosylated (N-linked (GlcNAc...) asparagine). Residues 177-197 form a helical membrane-spanning segment; sequence VLSGIIQLLLGVLQIGFVVIY. Topologically, residues 198–201 are cytoplasmic; the sequence is LSES. A helical membrane pass occupies residues 202–222; it reads LISGFTTAAAIHVLVSQLKFM. The Extracellular portion of the chain corresponds to 223–250; the sequence is LQLTVPAHSDPFSIFKVLESVFSQIQKT. The chain crosses the membrane as a helical span at residues 251-271; the sequence is NIADLVTSVIILVVVFVVKEI. Residues 272-278 lie on the Cytoplasmic side of the membrane; it reads NQRYRSK. The helical transmembrane segment at 279-299 threads the bilayer; that stretch reads LPVPIPIELIMTVIATGISYG. Residues 300 to 335 are Extracellular-facing; sequence CNFEQRFGVAVVGNMSLGFQPPITPSVEVFQDTIGD. A helical membrane pass occupies residues 336 to 356; the sequence is CFGIAIVGFAVAFSVASVYSL. Over 357–367 the chain is Cytoplasmic; sequence KYDYPIDGNQE. Residues 368–388 form a helical membrane-spanning segment; the sequence is LIALGVSNIFTGAFKGFAGST. The Extracellular portion of the chain corresponds to 389-404; the sequence is ALSRSGVQESTGGKTQ. A helical transmembrane segment spans residues 405-425; sequence VAGLLSAVIVLIVIVAIGFLL. The Cytoplasmic segment spans residues 426-462; it reads QPLQKSVLAALALGNLKGMLMQFAEIGRLWKKDKYDC. The chain crosses the membrane as a helical span at residues 463–483; that stretch reads LIWIMTFIFAIVLGLGLGLAA. Topologically, residues 484 to 757 are extracellular; sequence SVAFQLLTIV…ECQVPVETKF (274 aa). Residues 518–713 enclose the STAS domain; that stretch reads NYADVYEPEG…LTIHDAILHI (196 aa). Residues 754–757 carry the PDZ-binding motif; the sequence is ETKF.

It belongs to the SLC26A/SulP transporter (TC 2.A.53) family. As to quaternary structure, interacts with PDZK1, CFTR, SLC26A6 and NHERF1. Interacts (via PDZ-binding motif) with NHERF4 (via the third PDZ domain); interaction leads to decreased expression of SLC26A3 on the cell membrane resulting in its reduced exchanger activity. In terms of processing, N-glycosylation is required for efficient cell surface expression, and protection from proteolytic degradation.

The protein localises to the apical cell membrane. The protein resides in the membrane. Its subcellular location is the cell membrane. It carries out the reaction hydrogencarbonate(in) + 2 chloride(out) = hydrogencarbonate(out) + 2 chloride(in). In terms of biological role, mediates chloride-bicarbonate exchange with a chloride bicarbonate stoichiometry of 2:1 in the intestinal epithelia. Plays a role in the chloride and bicarbonate homeostasis during sperm epididymal maturation and capacitation. In Rattus norvegicus (Rat), this protein is Chloride anion exchanger (Slc26a3).